The sequence spans 189 residues: Elongation factor P (189 aa).

Lys-34 carries the N6-(3,6-diaminohexanoyl)-5-hydroxylysine modification.

It belongs to the elongation factor P family. May be beta-lysylated on the epsilon-amino group of Lys-34 by the combined action of EpmA and EpmB, and then hydroxylated on the C5 position of the same residue by EpmC (if this protein is present). Lysylation is critical for the stimulatory effect of EF-P on peptide-bond formation. The lysylation moiety may extend toward the peptidyltransferase center and stabilize the terminal 3-CCA end of the tRNA. Hydroxylation of the C5 position on Lys-34 may allow additional potential stabilizing hydrogen-bond interactions with the P-tRNA.

The protein localises to the cytoplasm. The protein operates within protein biosynthesis; polypeptide chain elongation. Its function is as follows. Involved in peptide bond synthesis. Alleviates ribosome stalling that occurs when 3 or more consecutive Pro residues or the sequence PPG is present in a protein, possibly by augmenting the peptidyl transferase activity of the ribosome. Modification of Lys-34 is required for alleviation. The polypeptide is Elongation factor P (Francisella tularensis subsp. tularensis (strain FSC 198)).